The sequence spans 129 residues: UPF0102 protein Cag_1992 (129 aa).

It belongs to the UPF0102 family.

This chain is UPF0102 protein Cag_1992, found in Chlorobium chlorochromatii (strain CaD3).